We begin with the raw amino-acid sequence, 134 residues long: Acyl carrier protein, chloroplastic (134 aa).

The transit peptide at 1–51 (MATTFSASVSMQATSLATTTRISFQKPVLVSNHGRTNLSFNLSRTRLSISC) directs the protein to the chloroplast. Positions 55–130 (QETVEKVSEI…QAAELIEELM (76 aa)) constitute a Carrier domain. Serine 90 carries the O-(pantetheine 4'-phosphoryl)serine modification.

It belongs to the acyl carrier protein (ACP) family. 4'-phosphopantetheine is transferred from CoA to a specific serine of apo-ACP by acpS. This modification is essential for activity because fatty acids are bound in thioester linkage to the sulfhydryl of the prosthetic group. Seed.

The protein localises to the plastid. It localises to the chloroplast. It functions in the pathway lipid metabolism; fatty acid biosynthesis. Carrier of the growing fatty acid chain in fatty acid biosynthesis. This chain is Acyl carrier protein, chloroplastic (ACL1.C1), found in Brassica napus (Rape).